Reading from the N-terminus, the 218-residue chain is Copper acquisition factor BIM1 (218 aa).

An N-terminal signal peptide occupies residues methionine 1–alanine 19. 2 residues coordinate Cu(2+): histidine 20 and histidine 65. N-linked (GlcNAc...) asparagine glycosylation is found at asparagine 87, asparagine 91, and asparagine 124. A Cu(2+)-binding site is contributed by aspartate 138. Asparagine 158 and asparagine 170 each carry an N-linked (GlcNAc...) asparagine glycan. Positions threonine 160 to serine 194 are disordered. The segment covering alanine 165 to serine 194 has biased composition (low complexity). Residue serine 190 is the site of GPI-anchor amidated serine attachment. Residues serine 191–leucine 218 constitute a propeptide, removed in mature form.

The protein belongs to the X325 family. In terms of assembly, interacts with the CUF1-dependent copper transporter CTR1. Cu(2+) serves as cofactor.

It localises to the cell membrane. In terms of biological role, lytic polysaccharide monooxygenase-like protein that has diverged to biological functions other than polysaccharide degradation since it does not perform oxidative cleavage of polysaccharides. Cell surface-bound protein that functions in the copper-accumulation pathway shared by the CUF1-dependent copper transporter CTR1. Involved in maintaining cell wall integrity during copper deficiency. Binds Cu(2+) with an estimated 1:1 stoichiometry and might serve as an extracellular copper ligand. FRE4 and FRE7 metalloreductases probably function together with CTR1 and BIM1 to liberate the Cu(2+) bound to the BIM1 copper-binding site for subsequent import of Cu(+) into the cell by CTR1, via the reduction of BIM1-bound Cu(2+) to Cu(+) to reduce binding affinity for BIM1 but increase affinity for CTR1. Facilitates copper acquisition in the brain of mammalian hosts and acts as a copper-dependent virulence trait in fungal meningitis. While BIM1 plays a critical role in cryptococcal meningitis, at least in part through its role in copper acquisition, it could play additional roles during copper limitation or as a means to invade and colonize host tissues in the brain, by compromising host carbohydrate integrity via its lytic polysaccharide monooxygenase (LPMO) activity, which has still to be determined. The chain is Copper acquisition factor BIM1 from Cryptococcus neoformans var. grubii serotype A (strain H99 / ATCC 208821 / CBS 10515 / FGSC 9487) (Filobasidiella neoformans var. grubii).